The following is a 447-amino-acid chain: MNAWEVNFDGLVGLTHHYAGLSFGNEASTRHRFQVSNPRLAAKQGLLKMKALADAGFPQAVIPPHERPFIPVLRQLGFSGSDEQVLEKVARQAPHWLSSVSSASPMWVANAATIAPSADTLDGKVHLTVANLNNKFHRSLEAPVTESLLKAIFNDEEKFSVHSALPQVALLGDEGAANHNRLGGHYGEPGMQLFVYGREEGNDTRPSRYPARQTREASEAVARLNQVNPQQVIFAQQNPDVIDQGVFHNDVIAVSNRQVLFCHQQAFARQSQLLANLRARVNGFMAIEVPATQVSVSDTVSTYLFNSQLLSRDDGSMMLVLPQECREHAGVWGYLNELLAADNPISELKVFDLRESMANGGGPACLRLRVVLTEEERRAVNPAVMMNDTLFNALNDWVDRYYRDRLTAADLADPQLLREGREALDVLSQLLNLGSVYPFQREGGGNG.

Residues 19–28 (AGLSFGNEAS), Asn-110, and 137–138 (HR) contribute to the substrate site. The active site involves Glu-174. Residue Arg-212 coordinates substrate. The active site involves His-248. Asp-250 and Asn-359 together coordinate substrate. Cys-365 acts as the Nucleophile in catalysis.

It belongs to the succinylarginine dihydrolase family. In terms of assembly, homodimer.

The catalysed reaction is N(2)-succinyl-L-arginine + 2 H2O + 2 H(+) = N(2)-succinyl-L-ornithine + 2 NH4(+) + CO2. It participates in amino-acid degradation; L-arginine degradation via AST pathway; L-glutamate and succinate from L-arginine: step 2/5. In terms of biological role, catalyzes the hydrolysis of N(2)-succinylarginine into N(2)-succinylornithine, ammonia and CO(2). The chain is N-succinylarginine dihydrolase from Escherichia coli (strain K12 / MC4100 / BW2952).